Consider the following 273-residue polypeptide: Protein PERCC1 (273 aa).

Disordered stretches follow at residues 18 to 84 (SHES…PETP) and 253 to 273 (GGSE…LAEV). Over residues 28–56 (EAPEISEEEEEEEEEEEEEEEEEEVDQDQ) the composition is skewed to acidic residues. Residues 67 to 83 (DSQSSGVVPQDPSSPET) are compositionally biased toward polar residues.

As to expression, specifically expressed in the stomach, pancreas and intestine. In gastrointestinal tissue, expression is primarily restricted to gastric G cells and duodenal enteroendocrine cells (EECs).

Its function is as follows. Plays a critical role in intestinal function by promoting the development of enteroendocrine cells (EECs) of the gastrointestinal tract and pancreas. It is thereby required for normal enteroendocrine peptide hormone secretion. This Mus musculus (Mouse) protein is Protein PERCC1.